A 165-amino-acid chain; its full sequence is Iron sulfur cluster assembly protein 1, mitochondrial (165 aa).

The N-terminal 27 residues, 1–27 (MLPVITRFARPALMAIRPVNAMGVLRA), are a transit peptide targeting the mitochondrion. An SSQ1 binding region region spans residues 132–136 (LPPVK).

This sequence belongs to the NifU family. Homodimer, but can exist as monomers or trimers. Oligomerization may be regulated by Zn(2+) availability. Component of the core Fe-S cluster (ISC) assembly machinery. Interacts with YFH1/frataxin with a 1 to 1 stoichiometry; the interaction is direct. Interacts with the mitochondrial co-chaperones JAC1 and SSQ1. Interacts with NFS1. Interacts with YAH1/ferredoxin; interacts with the reduced form. It depends on [2Fe-2S] cluster as a cofactor. Zn(2+) serves as cofactor.

The protein localises to the mitochondrion matrix. It participates in cofactor biosynthesis; iron-sulfur cluster biosynthesis. Scaffold protein for the de novo synthesis of iron-sulfur (Fe-S) clusters within mitochondria, which is required for maturation of both mitochondrial and cytoplasmic [2Fe-2S] and [4Fe-4S] proteins. First, a [2Fe-2S] cluster is transiently assembled on the scaffold proteins ISU1 and ISU2. In a second step, the cluster is released from ISU1/ISU2, transferred to glutaredoxin GRX5, followed by the formation of mitochondrial [2Fe-2S] proteins, the synthesis of [4Fe-4S] clusters and their target-specific insertion into the recipient apoproteins. Cluster assembly on ISU1/ISU2 depends on the function of the cysteine desulfurase complex NFS1-ISD11, which serves as the sulfur donor for cluster synthesis, the iron-binding protein frataxin (YFH1) as the putative iron donor, and the electron transfer chain comprised of ferredoxin reductase ARH1 and ferredoxin YAH1, which receive their electrons from NADH. Fe-S cluster release from ISU1/ISU2 is achieved by interaction with the Hsp70 chaperone SSQ1, assisted by the DnaJ-like co-chaperone JAC1 and the nucleotide exchange factor MGE1. ISU1 is the major isoform in yeast, while ISU2 is not detectable in cells grown to stationary phase. Also involved in production of a sulfur precursor required for thiolation of cytoplasmic tRNAs. This is Iron sulfur cluster assembly protein 1, mitochondrial from Saccharomyces cerevisiae (strain ATCC 204508 / S288c) (Baker's yeast).